The sequence spans 248 residues: Triosephosphate isomerase (248 aa).

9 to 11 (NWK) serves as a coordination point for substrate. His-94 serves as the catalytic Electrophile. Catalysis depends on Glu-166, which acts as the Proton acceptor. Substrate-binding positions include Gly-172, Ser-212, and 233-234 (GG).

The protein belongs to the triosephosphate isomerase family. Homodimer.

The protein localises to the cytoplasm. The enzyme catalyses D-glyceraldehyde 3-phosphate = dihydroxyacetone phosphate. Its pathway is carbohydrate biosynthesis; gluconeogenesis. The protein operates within carbohydrate degradation; glycolysis; D-glyceraldehyde 3-phosphate from glycerone phosphate: step 1/1. In terms of biological role, involved in the gluconeogenesis. Catalyzes stereospecifically the conversion of dihydroxyacetone phosphate (DHAP) to D-glyceraldehyde-3-phosphate (G3P). This is Triosephosphate isomerase from Caldanaerobacter subterraneus subsp. tengcongensis (strain DSM 15242 / JCM 11007 / NBRC 100824 / MB4) (Thermoanaerobacter tengcongensis).